The following is a 161-amino-acid chain: Transcription antitermination protein NusB (161 aa).

The protein belongs to the NusB family.

Its function is as follows. Involved in transcription antitermination. Required for transcription of ribosomal RNA (rRNA) genes. Binds specifically to the boxA antiterminator sequence of the ribosomal RNA (rrn) operons. The protein is Transcription antitermination protein NusB of Nitrobacter winogradskyi (strain ATCC 25391 / DSM 10237 / CIP 104748 / NCIMB 11846 / Nb-255).